The sequence spans 340 residues: MRMVCLGLNHRTAPVEIRERFAVPSHKLREEGQRIRSLPGVDQCVVLSTCNRMEIYYWSNAPENAQEHILSHFLGDGRGELDMASYFYSHQGEDALGHLCRVLSGLDSMVLGETEIFGQVKTAYQTALDAGVTAACANKTFQKAFTIGKKVRTESQIHAGATSVGSVAVELAEQIFGDLSGTRVLILGAGEMSRVTGRALHARGAEGIYVANRSFDRAVELAGMIGGQAIRYDVWGNYLRDIDVVVAATAAPHCIITRETLLPLRASRKYRSLFLIDISVPRNISPDVADIDEVYLYDIDTLTQLADEAKRSRKQEVSRCEAIIRDSISRYFPDSALYDQ.

Substrate is bound by residues 49-52, S108, 113-115, and Q119; these read TCNR and ETE. C50 serves as the catalytic Nucleophile. Position 188-193 (188-193) interacts with NADP(+); it reads GAGEMS.

The protein belongs to the glutamyl-tRNA reductase family. Homodimer.

It catalyses the reaction (S)-4-amino-5-oxopentanoate + tRNA(Glu) + NADP(+) = L-glutamyl-tRNA(Glu) + NADPH + H(+). It participates in porphyrin-containing compound metabolism; protoporphyrin-IX biosynthesis; 5-aminolevulinate from L-glutamyl-tRNA(Glu): step 1/2. Functionally, catalyzes the NADPH-dependent reduction of glutamyl-tRNA(Glu) to glutamate 1-semialdehyde (GSA). The polypeptide is Glutamyl-tRNA reductase (Akkermansia muciniphila (strain ATCC BAA-835 / DSM 22959 / JCM 33894 / BCRC 81048 / CCUG 64013 / CIP 107961 / Muc)).